A 288-amino-acid polypeptide reads, in one-letter code: Executioner caspase (288 aa).

Cys131 is a catalytic residue.

The protein belongs to the peptidase C14A family.

In terms of biological role, may induce host cell apoptosis and contribute of the establishment of a special cell cleavage process in which apoppotic bodies are rescued by the virus and differentiate to form large vesicles in which virion assembles. The polypeptide is Executioner caspase (Spodoptera frugiperda ascovirus 1a (SfAV-1a)).